A 165-amino-acid chain; its full sequence is Cyclic pyranopterin monophosphate synthase (165 aa).

Substrate is bound by residues 83–85 and 120–121; these read FCH and ME. Residue D135 is part of the active site.

It belongs to the MoaC family. Homohexamer; trimer of dimers.

It catalyses the reaction (8S)-3',8-cyclo-7,8-dihydroguanosine 5'-triphosphate = cyclic pyranopterin phosphate + diphosphate. Its pathway is cofactor biosynthesis; molybdopterin biosynthesis. Its function is as follows. Catalyzes the conversion of (8S)-3',8-cyclo-7,8-dihydroguanosine 5'-triphosphate to cyclic pyranopterin monophosphate (cPMP). This Xanthomonas oryzae pv. oryzae (strain MAFF 311018) protein is Cyclic pyranopterin monophosphate synthase.